Here is a 288-residue protein sequence, read N- to C-terminus: General transcription factor IIE subunit 2 (288 aa).

The disordered stretch occupies residues 16–56 (ALTTPAVEKRPSASSESSKKKRAKLELSSTSGSKPSSDGSN). A compositionally biased stretch (low complexity) spans 41–56 (ELSSTSGSKPSSDGSN). The segment at residues 63–143 (SLSGSSGYKF…YAFKPKYNLK (81 aa)) is a DNA-binding region (TFIIE beta).

The protein belongs to the TFIIE beta subunit family. Tetramer of two alpha and two beta chains.

It is found in the nucleus. In terms of biological role, recruits TFIIH to the initiation complex and stimulates the RNA polymerase II C-terminal domain kinase and DNA-dependent ATPase activities of TFIIH. Both TFIIH and TFIIE are required for promoter clearance by RNA polymerase. The protein is General transcription factor IIE subunit 2 (gtf2e2) of Xenopus laevis (African clawed frog).